A 204-amino-acid chain; its full sequence is uncharacterized protein (204 aa).

This is an uncharacterized protein from Saccharomyces cerevisiae (strain ATCC 204508 / S288c) (Baker's yeast).